A 493-amino-acid polypeptide reads, in one-letter code: MLGSGLILVAILAYLSVMVLVFVWKQKFRGKLPPGPTPLPYIGNYLQLNTKDIYSSITELSERYGPVFTIYLGPRPVVVLYGYDAVKEALVDQAEEFSGRGEQATYNTLFKDYGVAFSSGERAKQLRRFSIATLRDFGVGKRGVEERIQEEAAYLIKMLRSTRGAPIDPNDYLSQTVSNVISSVVFGDAFDYEDKEFLELLHMMNEMNKFAASPVGQLYDMFHSVMKYLPGPQQQIIKNTKELEDFMIRKVKQNQSTLDLNSARNFIDSFLIHMHEEKKNPTSEFNIKNLVMTSLNLFFAGSETVSSTIRYGFLLLMKYPEVEAKVHEEIDRVIGRNRQPQFEDRMKMPYTEAVINEIQRFANLAPLGIPRKTIKNTTFRGFFLPKDTDVYPILGSLLTDPKFFTSPKHFNPQNFLDDRGQLKKIAAFVPFSVGKRFCLGDGLARMELFLFLTTILQNFRLKFPKKLEDIDASPKPLGFSRIIPRYTMSFLPI.

Position 438 (Cys-438) interacts with heme.

Belongs to the cytochrome P450 family. The cofactor is heme. Liver.

It localises to the endoplasmic reticulum membrane. The protein localises to the microsome membrane. The catalysed reaction is an organic molecule + reduced [NADPH--hemoprotein reductase] + O2 = an alcohol + oxidized [NADPH--hemoprotein reductase] + H2O + H(+). Functionally, cytochromes P450 are a group of heme-thiolate monooxygenases. In liver microsomes, this enzyme is involved in an NADPH-dependent electron transport pathway. It oxidizes a variety of structurally unrelated compounds, including steroids, fatty acids, and xenobiotics. The sequence is that of Cytochrome P450 2A9 (CYP2A9) from Mesocricetus auratus (Golden hamster).